We begin with the raw amino-acid sequence, 76 residues long: 8.4 kDa cro protein (76 aa).

The sequence is that of 8.4 kDa cro protein (cro-HTT) from Escherichia coli (Bacteriophage HK022).